The following is a 473-amino-acid chain: O-methyltransferase aclU (473 aa).

S-adenosyl-L-methionine contacts are provided by residues aspartate 320 and glycine 354 to phenylalanine 356. Histidine 373 acts as the Proton acceptor in catalysis.

Belongs to the class I-like SAM-binding methyltransferase superfamily. Cation-independent O-methyltransferase family. COMT subfamily.

It participates in mycotoxin biosynthesis. O-methyltransferase; part of the gene cluster that mediates the biosynthesis of aspirochlorine (or antibiotic A30641), an unusual halogenated spiro compound with distinctive antifungal properties due to selective inhibition of protein biosynthesis, and which is also active against bacteria, viruses, and murine tumor cells. The non-ribosomal peptide synthetase (NRPS) aclP is responsible the formation of the diketopiperazine (DKP) core from the condensation of 2 phenylalanine residues. One Phe residue is tailored into chlorotyrosine by hydroxylation and chlorination, whereas the second Phe undergoes an unprecedented C-C bond cleavage to be converted into glycine. After formation of the DKP, sulfur is incorporated into the DKP by conjugation with glutathione by aclG, followed by its stepwise degradation to the thiol by aclI, aclJ and aclK, and the dithiol oxidation by aclT. In addition, oxygenases (aclB, aclC, aclL and aclO) and O-methyltransferases (aclM and aclU) act as tailoring enzymes to produce the intermediate dechloroaspirochlorine. Ultimately, chlorination of dechloroaspirochlorine by the halogenase aclH is the last step in the aspirochlorine pathway. The sequence is that of O-methyltransferase aclU from Aspergillus oryzae (strain ATCC 42149 / RIB 40) (Yellow koji mold).